Reading from the N-terminus, the 197-residue chain is Transcription factor FapR (197 aa).

It belongs to the FapR family.

Transcriptional factor involved in regulation of membrane lipid biosynthesis by repressing genes involved in fatty acid and phospholipid metabolism. The chain is Transcription factor FapR from Bacillus cereus (strain B4264).